The following is a 523-amino-acid chain: Translation initiation factor eIF2B subunit delta (523 aa).

Residues 1-147 (MAAVAVAVRE…PSGVKRLPEY (147 aa)) are disordered. Ala-2 is modified (N-acetylalanine). Ser-12 is subject to Phosphoserine. Positions 30–40 (EMTKEEKLQLR) are enriched in basic and acidic residues. The span at 41–51 (KEKKQQKKKRK) shows a compositional bias: basic residues. Phosphothreonine is present on Thr-86. Positions 87 to 121 (PREKVPAGRSKAELRAERRAKQEAERALKQARKGE) are enriched in basic and acidic residues. Ser-130 carries the post-translational modification Phosphoserine. Positions 170 to 179 (RKDYGSKVSL) are may bind the chemical integrated stress response (ISR) inhibitor ISRIB.

This sequence belongs to the eIF-2B alpha/beta/delta subunits family. Component of the translation initiation factor 2B (eIF2B) complex which is a heterodecamer of two sets of five different subunits: alpha, beta, gamma, delta and epsilon. Subunits alpha, beta and delta comprise a regulatory subcomplex and subunits epsilon and gamma comprise a catalytic subcomplex. Within the complex, the hexameric regulatory complex resides at the center, with the two heterodimeric catalytic subcomplexes bound on opposite sides.

Its subcellular location is the cytoplasm. The protein localises to the cytosol. With respect to regulation, activated by the chemical integrated stress response (ISR) inhibitor ISRIB which stimulates guanine nucleotide exchange factor activity for both phosphorylated and unphosphorylated eIF2. Acts as a component of the translation initiation factor 2B (eIF2B) complex, which catalyzes the exchange of GDP for GTP on eukaryotic initiation factor 2 (eIF2) gamma subunit. Its guanine nucleotide exchange factor activity is repressed when bound to eIF2 complex phosphorylated on the alpha subunit, thereby limiting the amount of methionyl-initiator methionine tRNA available to the ribosome and consequently global translation is repressed. The sequence is that of Translation initiation factor eIF2B subunit delta (EIF2B4) from Homo sapiens (Human).